Here is a 438-residue protein sequence, read N- to C-terminus: MPKIVVVGAVAGGATCASQIRRLDKESDIIIFEKDRDMSFANCALPYVIGEVVEDRKYALAYTPEKFYDRKQITVKTYHEVIAINDERQTVSVLNRKTNEQFEESYDKLILSPGASANSLGFESDITFTLRNLEDTDAIDQFIKANQVDKVLVVGAGYVSLEVLENLYERGLHPTLIHRSDKINKLMDADMNQPILDELDKREIPYRLNEEIDAINGNEITFKSGKVEHYDMIIEGVGTHPNSKFIESSNIKLDRKGFIPVNDKFETNVPNIYVIGDIATSHYRHVDLPASVPLAWGAHRAASIVAEQIAGNDTIEFKGFLGNNIVKFFDYTFASVGVKPNELKQFDYKMVEVTQGAHANYYPGNSPLHLRVYYDTSNRQILRAAAVGKEGADKRIDVLSMAMMNQLTVDELTEFEVAYAPPYSHPKDLINMIGYKAK.

8 to 33 (GAVAGGATCASQIRRLDKESDIIIFE) is an FAD binding site. Substrate contacts are provided by Thr-15, Gln-19, Arg-22, Ser-39, and Asn-42. Cys-43 (nucleophile) is an active-site residue. Cys-43 (redox-active) is an active-site residue. Residue Lys-71 coordinates substrate. An NADP(+)-binding site is contributed by 151–166 (VLVVGAGYVSLEVLEN). 267–277 (TNVPNIYVIGD) contributes to the FAD binding site. A substrate-binding site is contributed by His-299. Position 419 (Tyr-419) interacts with FAD. Residue Lys-427 coordinates substrate.

Belongs to the class-III pyridine nucleotide-disulfide oxidoreductase family. As to quaternary structure, homodimer. The cofactor is FAD.

The enzyme catalyses NADP(+) + 2 CoA = CoA-disulfide + NADPH + H(+). In terms of biological role, catalyzes specifically the NADPH-dependent reduction of coenzyme A disulfide. The polypeptide is Coenzyme A disulfide reductase (Staphylococcus aureus (strain MRSA252)).